Here is a 165-residue protein sequence, read N- to C-terminus: Coronafacic acid dehydratase (165 aa).

Residue histidine 62 is part of the active site.

The protein belongs to the thioester dehydratase family.

It functions in the pathway phytotoxin biosynthesis; coronatine biosynthesis. The polypeptide is Coronafacic acid dehydratase (cfa2) (Pseudomonas savastanoi pv. glycinea (Pseudomonas syringae pv. glycinea)).